A 67-amino-acid chain; its full sequence is MFTLKKSFLLLFFLGTITLSLCEEERGADDDDGEEEVKRGIMDTVKGVAKTVAASLLDKLKCKITGC.

Positions 1–22 (MFTLKKSFLLLFFLGTITLSLC) are cleaved as a signal peptide. Residues 23 to 39 (EEERGADDDDGEEEVKR) constitute a propeptide that is removed on maturation. Residues C62 and C67 are joined by a disulfide bond.

Expressed by the skin glands.

The protein localises to the secreted. Functionally, antimicrobial peptide. In Odorrana versabilis (Chinese bamboo leaf odorous frog), this protein is Ranatuerin-2Vb.